The following is a 391-amino-acid chain: Putative gustatory receptor 36b (391 aa).

Residues 1-4 (MVDW) lie on the Cytoplasmic side of the membrane. The helical transmembrane segment at 5–25 (VVLLLKAVHIYCYLIGLSNFE) threads the bilayer. At 26–39 (FDCRTGRVFKSRRC) the chain is on the extracellular side. The helical transmembrane segment at 40-60 (TIYAFMANIFILITIIYNFTA) threads the bilayer. Residues 61–74 (HGDTNLLFQSANKL) lie on the Cytoplasmic side of the membrane. The helical transmembrane segment at 75–95 (HEYVIIIMSGLKIVAGLITVL) threads the bilayer. The Extracellular segment spans residues 96–127 (NRWLQRGQMMQLVKDVIRLYMINPQLKSMIRW). A helical membrane pass occupies residues 128–148 (GILLKAFISFAIELLQVTLSV). Over 149–165 (DALDRQGTAEMMGLLVK) the chain is Cytoplasmic. The helical transmembrane segment at 166–186 (LCVSFIMNLAISQHFLVILLI) threads the bilayer. At 187 to 284 (RAQYRIMNAK…YKYGPHNLKL (98 aa)) the chain is on the extracellular side. The chain crosses the membrane as a helical span at residues 285 to 305 (SAKTSIIVCILITLFYLDALV). Residues 306-363 (NCNNMLRVLDHHKDFLGLLEERTVFASSLDIRLEESFESLQLQLARNPLKINVMGMFP) lie on the Cytoplasmic side of the membrane. Residues 364–384 (ITRGSTAAMCASVIVNSIFLI) form a helical membrane-spanning segment. Residues 385–391 (QFDMEFF) are Extracellular-facing.

The protein belongs to the insect chemoreceptor superfamily. Gustatory receptor (GR) family. Gr22e subfamily. Expressed in neurons of the terminal external chemosensory organ of larvae.

It is found in the cell membrane. Its function is as follows. Probable gustatory receptor which mediates acceptance or avoidance behavior, depending on its substrates. The chain is Putative gustatory receptor 36b (Gr36b) from Drosophila melanogaster (Fruit fly).